Reading from the N-terminus, the 391-residue chain is Phosphoglycerate kinase (391 aa).

Substrate-binding positions include 21–23, Arg-36, 59–62, Arg-113, and Arg-146; these read DLN and HLGR. ATP is bound by residues Lys-197, Glu-319, and 345–348; that span reads GGDT.

It belongs to the phosphoglycerate kinase family. In terms of assembly, monomer.

It localises to the cytoplasm. The enzyme catalyses (2R)-3-phosphoglycerate + ATP = (2R)-3-phospho-glyceroyl phosphate + ADP. Its pathway is carbohydrate degradation; glycolysis; pyruvate from D-glyceraldehyde 3-phosphate: step 2/5. In Xanthomonas axonopodis pv. citri (strain 306), this protein is Phosphoglycerate kinase.